A 190-amino-acid chain; its full sequence is Thiamine biosynthesis protein X (190 aa).

Positions 1–22 are cleaved as a signal peptide; that stretch reads MSISRTVFGIAATAALSAALVA. Cysteine 23 carries N-palmitoyl cysteine lipidation. Cysteine 23 carries the S-diacylglycerol cysteine lipid modification. Residues 43–68 form a disordered region; sequence SQNPTSASSTSTSSATTTSSAPVEED. The span at 47–63 shows a compositional bias: low complexity; it reads TSASSTSTSSATTTSSA.

Its subcellular location is the cell membrane. In terms of biological role, is necessary for biosynthesis of the 4-methyl-5-(beta-hydroxyethyl)thiazol component from which thiamine is formed. The sequence is that of Thiamine biosynthesis protein X (thiX) from Corynebacterium glutamicum (strain ATCC 13032 / DSM 20300 / JCM 1318 / BCRC 11384 / CCUG 27702 / LMG 3730 / NBRC 12168 / NCIMB 10025 / NRRL B-2784 / 534).